The sequence spans 347 residues: 4-hydroxy-2-oxovalerate aldolase (347 aa).

One can recognise a Pyruvate carboxyltransferase domain in the interval 2–252; that stretch reads ILISDATLRD…DTRTTFERVM (251 aa). Position 10-11 (10-11) interacts with substrate; the sequence is RD. A Mn(2+)-binding site is contributed by aspartate 11. Residue histidine 14 is the Proton acceptor of the active site. Substrate-binding residues include serine 164 and histidine 191. Mn(2+)-binding residues include histidine 191 and histidine 193.

It belongs to the 4-hydroxy-2-oxovalerate aldolase family.

It catalyses the reaction (S)-4-hydroxy-2-oxopentanoate = acetaldehyde + pyruvate. The protein is 4-hydroxy-2-oxovalerate aldolase (mhpE) of Burkholderia pseudomallei (strain 1710b).